Here is a 1130-residue protein sequence, read N- to C-terminus: Roquin-1 (1130 aa).

Zn(2+) is bound by residues cysteine 14, cysteine 17, cysteine 33, histidine 35, cysteine 38, cysteine 50, and aspartate 53. The RING-type; degenerate zinc-finger motif lies at 14–54 (CPICTQTFDETIRKPISLGCGHTVCKMCLNKLHRKACPFDQ). The HEPN-N stretch occupies residues 128–176 (VLSRPMQRKLVTLVHCQLVEEEGRIRAMRAARSLGERTVTELILQHQNP). The segment at 177–326 (QQLSSNLWAA…MQSIIDKLQT (150 aa)) is ROQ. Positions 327-399 (PASFAQSVQE…GLVDYIQNHS (73 aa)) are HEPN-C. The C3H1-type zinc finger occupies 413–441 (KYKTYMCRDMKQRGGCPRGASCTFAHSQE). Serine 462 carries the phosphoserine modification. Disordered regions lie at residues 493 to 567 (LPNG…DLPP) and 722 to 750 (PHPAQIRPSYPRDPPYSRLPPPQPHPSLD). Over residues 497–506 (IASSGSTVTQ) the composition is skewed to polar residues. Phosphoserine is present on residues serine 531 and serine 535. 2 stretches are compositionally biased toward pro residues: residues 553 to 567 (NPHPVPPRGPTDLPP) and 732 to 746 (PRDPPYSRLPPPQPH). Phosphoserine occurs at positions 861, 1107, and 1110. Residues 1100 to 1130 (KTSSLNLSEDSEGGGDNNDSQRSGVVSNSAP) form a disordered region. Residues 1116–1130 (NNDSQRSGVVSNSAP) are compositionally biased toward polar residues.

Interacts with DDX6 and EDC4. Interacts with CCR4-NOT deadenylase complex. Interacts with RC3H1; the interaction is RNA independent. Proteolytically cleaved after Arg-510 and Arg-579 by MALT1 in activated CD4(+) T cells; cleavage at Arg-510 and Arg-579 is critical for promoting RC3H1 degradation in response to T-cell receptor (TCR) stimulation, and hence is necessary for prolonging the stability of a set of mRNAs controlling Th17 cell differentiation. As to expression, widely expressed, with highest levels in lymph node and thymus and slightly lesser amounts in brain, lung, and spleen (at protein level). Very weak expression in heart, muscle, and kidney (at protein level). Expressed in CD4(+) helper T-cells (at protein level).

Its subcellular location is the cytoplasm. It is found in the P-body. The protein resides in the cytoplasmic granule. It catalyses the reaction S-ubiquitinyl-[E2 ubiquitin-conjugating enzyme]-L-cysteine + [acceptor protein]-L-lysine = [E2 ubiquitin-conjugating enzyme]-L-cysteine + N(6)-ubiquitinyl-[acceptor protein]-L-lysine.. It functions in the pathway protein modification; protein ubiquitination. Its function is as follows. Post-transcriptional repressor of mRNAs containing a conserved stem loop motif, called constitutive decay element (CDE), which is often located in the 3'-UTR, as in HMGXB3, ICOS, IER3, NFKBID, NFKBIZ, PPP1R10, TNF, TNFRSF4 and in many more mRNAs. Cleaves translationally inactive mRNAs harboring a stem-loop (SL), often located in their 3'-UTRs, during the early phase of inflammation in a helicase UPF1-independent manner. Binds to CDE and promotes mRNA deadenylation and degradation. This process does not involve miRNAs. In follicular helper T (Tfh) cells, represses of ICOS and TNFRSF4/Ox40 expression, thus preventing spontaneous Tfh cell differentiation, germinal center B-cell differentiation in the absence of immunization and autoimmunity. In resting or LPS-stimulated macrophages, controls inflammation by suppressing TNF expression. Also recognizes CDE in its own mRNA and in that of paralogous RC3H2, possibly leading to feedback loop regulation. Inhibits cooperatively with ZC3H12A the differentiation of helper T cells Th17 in lungs. They repress target mRNA encoding the Th17 cell-promoting factors IL6, ICOS, REL, IRF4, NFKBID and NFKBIZ. The cooperation requires RNA-binding by RC3H1 and the nuclease activity of ZC3H12A. Recognizes and binds mRNAs containing a hexaloop stem-loop motif, called alternative decay element (ADE). Together with ZC3H12A, destabilizes TNFRSF4/OX40 mRNA by binding to the conserved stem loop structure in its 3'UTR. Able to interact with double-stranded RNA. miRNA-binding protein that regulates microRNA homeostasis. Enhances DICER-mediated processing of pre-MIR146a but reduces mature MIR146a levels through an increase of 3' end uridylation. Both inhibits ICOS mRNA expression and they may act together to exert the suppression. Acts as a ubiquitin E3 ligase. Pairs with E2 enzymes UBE2A, UBE2B, UBE2D2, UBE2F, UBE2G1, UBE2G2 and UBE2L3 and produces polyubiquitin chains. Shows the strongest activity when paired with UBE2N:UBE2V1 or UBE2N:UBE2V2 E2 complexes and generate both short and long polyubiquitin chains. This Mus musculus (Mouse) protein is Roquin-1.